The primary structure comprises 240 residues: MGKNQPLPILITGGGRRIGLAIAWHFLNQKQPVIVSYRTHYPAIDGLTQAGALCIQADFSTDDGVLAFAEKIKTHTPGLRAILHNASAWMAEAPGTPLSDVLACMMQIHVNTPYLLNHALERLLRGHGHAATDIIHFTDYVVERGSDKHIAYAASKAALDNMTRSFARKLAPEVKVNAIAPSLILFNENDDAEYRQQALNKSLMKTAPGEKEVIDLVDYLLTSCFVTGRSFAVDGGRHLR.

The active-site Proton acceptor is Tyr152.

The protein belongs to the short-chain dehydrogenases/reductases (SDR) family. FolM subfamily.

It catalyses the reaction (6S)-5,6,7,8-tetrahydrofolate + NADP(+) = 7,8-dihydrofolate + NADPH + H(+). The catalysed reaction is 7,8-dihydromonapterin + NADPH + H(+) = 5,6,7,8-tetrahydromonapterin + NADP(+). Functionally, catalyzes the reduction of dihydromonapterin to tetrahydromonapterin. Also has lower activity with dihydrofolate. The sequence is that of Dihydromonapterin reductase (folM) from Citrobacter koseri (strain ATCC BAA-895 / CDC 4225-83 / SGSC4696).